Here is a 1734-residue protein sequence, read N- to C-terminus: Complement C4-A (1734 aa).

The signal sequence occupies residues 1-19 (MRLLWGLAWVFSFCASSLQ). The cysteines at positions 66 and 95 are disulfide-linked. An N-linked (GlcNAc...) asparagine glycan is attached at N224. C633 and C667 are oxidised to a cystine. A propeptide spanning residues 674-677 (RQKR) is cleaved from the precursor. 3 disulfides stabilise this stretch: C700-C726, C701-C733, and C714-C734. Residues 700-734 (CCQDGMTKLPMKRTCEQRAARVPQQACREPFLSCC) form the Anaphylatoxin-like domain. N-linked (GlcNAc...) asparagine glycans are attached at residues N743 and N859. A cross-link (isoglutamyl cysteine thioester (Cys-Gln)) is located at residues 1002-1005 (CAEQ). N-linked (GlcNAc...) asparagine glycans are attached at residues N1128 and N1383. Y1409 is modified (sulfotyrosine). A propeptide spanning residues 1437-1443 (RRSRRRR) is cleaved from the precursor. Intrachain disulfides connect C1461–C1525, C1573–C1578, C1585–C1663, C1608–C1732, and C1708–C1717. Residues 1585–1732 (CPRLLRSLER…FLMEFSSRGC (148 aa)) form the NTR domain.

In absence of complement activation, circulates in blood as a disulfide-linked trimer of an alpha, beta and gamma chain. As to quaternary structure, complement C4b is composed of Complement C4b-A, Complement C4 beta and Complement C4 gamma chains that are associated via disulfide bonds. Non-enzymatic component of the C3 convertase, also named C4bC2b, composed of the serine protease complement C2b (C2), as well as complement C4b. Non-enzymatic component of the C5 convertase, also named C4bC2bC3b, composed of the serine protease complement C2b (C2), complement C3b, as well as complement C4b. In terms of processing, prior to secretion, the single-chain precursor is enzymatically cleaved by plasminogen (PLG) to yield non-identical chains alpha, beta and gamma. During activation of the complement systems, the alpha chain is cleaved into C4a and C4b by different proteases depending on the complement pathway: C4b stays linked to the beta and gamma chains, while C4a is released in the plasma. The alpha chain is cleaved by C1S to generate C4a and C4b following activation by the classical complement system. The alpha chain is cleaved to generate C4a and C4b by MASP2 following activation by the lectin complement system. The alpha chain is cleaved by GZMK to generate C4a and C4b following activation by the GZMK complement system. Further degradation of C4b by C1 into the inactive fragments C4c and C4d blocks the generation of C3 convertase. The proteolytic cleavages often are incomplete so that many structural forms can be found in plasma. Post-translationally, upon activation, the internal thioester bond reacts with carbohydrate antigens on the target surface to form amide or ester bonds, leading to covalent association with the surface of pathogens. Complement C4b interacts with complement C3b via a thioester linkage. In terms of processing, N- and O-glycosylated. O-glycosylated with a core 1 or possibly core 8 glycan.

It is found in the secreted. The protein resides in the synapse. It localises to the cell projection. The protein localises to the axon. Its subcellular location is the dendrite. It is found in the cell surface. Its activity is regulated as follows. Specifically inhibited by nanobody hC4Nb8, inhibiting the classical complement pathway. Functionally, precursor of non-enzymatic components of the classical, lectin and GZMK complement pathways, which consist in a cascade of proteins that leads to phagocytosis and breakdown of pathogens and signaling that strengthens the adaptive immune system. In terms of biological role, non-enzymatic component of C3 and C5 convertases. Generated following cleavage by complement proteases (C1S, MASP2 or GZMK, depending on the complement pathway), it covalently attaches to the surface of pathogens, where it acts as an opsonin that marks the surface of antigens for removal. It then recruits the serine protease complement C2b to form the C3 and C5 convertases, which cleave and activate C3 and C5, respectively, the next components of the complement pathways. Complement C4b-A isotype is responsible for effective binding to form amide bonds with immune aggregates or protein antigens, while complement C4b-B isotype catalyzes the transacylation of the thioester carbonyl group to form ester bonds with carbohydrate antigens. Putative humoral mediator released following cleavage by complement proteases (C1S, MASP2 or GZMK, depending on the complement pathway). While it is strongly similar to anaphylatoxins, its role is unclear. Was reported to act as a mediator of local inflammatory process; however these effects were probably due to contamination with C3a and/C5a anaphylatoxins in biological assays. This chain is Complement C4-A, found in Mus musculus (Mouse).